The chain runs to 367 residues: Uracil nucleotide/cysteinyl leukotriene receptor (367 aa).

Residues 1-28 (MSKRSWWAGSRKPPREMLKLSGSDSSQS) are disordered. The Extracellular portion of the chain corresponds to 1 to 64 (MSKRSWWAGS…TPLENMLFAS (64 aa)). N-linked (GlcNAc...) asparagine glycosylation is present at N42. The helical transmembrane segment at 65-85 (FYLLDFILALVGNTLALWLFI) threads the bilayer. At 86–92 (RDHKSGT) the chain is on the cytoplasmic side. Residues 93–113 (PANVFLMHLAVADLSCVLVLP) traverse the membrane as a helical segment. The Extracellular segment spans residues 114 to 133 (TRLVYHFSGNHWPFGEIACR). Residues C132 and C209 are joined by a disulfide bond. The helical transmembrane segment at 134–154 (LTGFLFYLNMYASIYFLTCIS) threads the bilayer. At 155-175 (ADRFLAIVHPVKSLKLRRPLY) the chain is on the cytoplasmic side. Residues 176-196 (AHLACAFLWVVVAVAMAPLLV) form a helical membrane-spanning segment. At 197 to 223 (SPQTVQTNHTVVCLQLYREKASHHALV) the chain is on the extracellular side. N204 is a glycosylation site (N-linked (GlcNAc...) asparagine). The chain crosses the membrane as a helical span at residues 224-244 (SLAVAFTFPFITTVTCYLLII). At 245–260 (RSLRQGLRVEKRLKTK) the chain is on the cytoplasmic side. A helical membrane pass occupies residues 261 to 281 (AVRMIAIVLAIFLVCFVPYHV). N-linked (GlcNAc...) asparagine glycosylation is present at N282. The Extracellular segment spans residues 282 to 308 (NRSVYVLHYRSHGASCATQRILALANR). Residues 309–329 (ITSCLTSLNGALDPIMYFFVA) form a helical membrane-spanning segment. The Cytoplasmic segment spans residues 330–367 (EKFRHALCNLLCGKRLKGPPPSFEGKTNESSLSAKSEL).

Belongs to the G-protein coupled receptor 1 family. As to expression, expressed in brain, kidney, heart and umbilical vein endothelial cells. Highest level in brain.

Its subcellular location is the cell membrane. In terms of biological role, dual specificity receptor for uracil nucleotides and cysteinyl leukotrienes (CysLTs). Signals through G(i) and inhibition of adenylyl cyclase. May mediate brain damage by nucleotides and CysLTs following ischemia. This Homo sapiens (Human) protein is Uracil nucleotide/cysteinyl leukotriene receptor (GPR17).